A 68-amino-acid chain; its full sequence is MDQIMQFVEPSRQFVKDSIRLVKRCTKPDRKEFQKIAMATAIGFAIMGFIGFFVKLIHIPINNIIVGG.

The Cytoplasmic portion of the chain corresponds to 1-32 (MDQIMQFVEPSRQFVKDSIRLVKRCTKPDRKE). Residues 33-61 (FQKIAMATAIGFAIMGFIGFFVKLIHIPI) form a helical membrane-spanning segment. At 62–68 (NNIIVGG) the chain is on the extracellular side.

The protein belongs to the SecE/SEC61-gamma family. As to quaternary structure, the SEC61 channel-forming translocon complex consists of channel-forming core components SEC61A1, SEC61B and SEC61G and different auxiliary components such as SEC62 and SEC63. The SEC61 channel associates with the multi-pass translocon (MPT) complex.

It is found in the endoplasmic reticulum membrane. Functionally, component of SEC61 channel-forming translocon complex that mediates transport of signal peptide-containing precursor polypeptides across the endoplasmic reticulum (ER). Forms a ribosome receptor and a gated pore in the ER membrane, both functions required for cotranslational translocation of nascent polypeptides. The SEC61 channel is also involved in ER membrane insertion of transmembrane proteins: it mediates membrane insertion of the first few transmembrane segments of proteins, while insertion of subsequent transmembrane regions of multi-pass membrane proteins is mediated by the multi-pass translocon (MPT) complex. This chain is Protein transport protein Sec61 subunit gamma (sec61g), found in Gadus morhua (Atlantic cod).